Reading from the N-terminus, the 222-residue chain is ATP-dependent Clp protease proteolytic subunit (222 aa).

Catalysis depends on Ser-125, which acts as the Nucleophile. The active site involves His-150.

This sequence belongs to the peptidase S14 family. Fourteen ClpP subunits assemble into 2 heptameric rings which stack back to back to give a disk-like structure with a central cavity, resembling the structure of eukaryotic proteasomes.

The protein localises to the cytoplasm. The enzyme catalyses Hydrolysis of proteins to small peptides in the presence of ATP and magnesium. alpha-casein is the usual test substrate. In the absence of ATP, only oligopeptides shorter than five residues are hydrolyzed (such as succinyl-Leu-Tyr-|-NHMec, and Leu-Tyr-Leu-|-Tyr-Trp, in which cleavage of the -Tyr-|-Leu- and -Tyr-|-Trp bonds also occurs).. Cleaves peptides in various proteins in a process that requires ATP hydrolysis. Has a chymotrypsin-like activity. Plays a major role in the degradation of misfolded proteins. The sequence is that of ATP-dependent Clp protease proteolytic subunit from Porphyromonas gingivalis (strain ATCC BAA-308 / W83).